Reading from the N-terminus, the 117-residue chain is Ig heavy chain V region 23 (117 aa).

A signal peptide spans 1–19 (MGWSCIILFLVAAANGVHS). The segment at 20 to 49 (QVQLQQPGTELVKPGASVKLSCKASGYTFT) is framework-1. A disulfide bond links Cys-41 and Cys-115. The interval 50-54 (SYWMH) is complementarity-determining-1. Residues 55-68 (WVKQRPGQGLEWIG) are framework-2. Positions 69-85 (NINPGNGGTNYNEKFKS) are complementarity-determining-2. Residues 86-117 (KVTLTVDKSSSTAYTQLSSLTSEDSAVYYCAR) form a framework-3 region.

This Mus musculus (Mouse) protein is Ig heavy chain V region 23.